The chain runs to 105 residues: Urease subunit beta (105 aa).

This sequence belongs to the urease beta subunit family. In terms of assembly, heterotrimer of UreA (gamma), UreB (beta) and UreC (alpha) subunits. Three heterotrimers associate to form the active enzyme.

It localises to the cytoplasm. It catalyses the reaction urea + 2 H2O + H(+) = hydrogencarbonate + 2 NH4(+). The protein operates within nitrogen metabolism; urea degradation; CO(2) and NH(3) from urea (urease route): step 1/1. The polypeptide is Urease subunit beta (Shewanella halifaxensis (strain HAW-EB4)).